We begin with the raw amino-acid sequence, 574 residues long: uncharacterized protein (574 aa).

The segment at 297 to 317 is disordered; it reads SAASKPRKRKKDEVSGAQVNS.

This is an uncharacterized protein from Mus musculus (Mouse).